We begin with the raw amino-acid sequence, 511 residues long: Maturase K (511 aa).

Belongs to the intron maturase 2 family. MatK subfamily.

The protein resides in the plastid. Usually encoded in the trnK tRNA gene intron. Probably assists in splicing its own and other chloroplast group II introns. In Lathraea clandestina (Purple toothwort), this protein is Maturase K.